A 142-amino-acid polypeptide reads, in one-letter code: Hemoglobin subunit alpha-1 (142 aa).

Residues 2–142 (VLSPADKTNV…VSTVLTSKYR (141 aa)) enclose the Globin domain. His-59 contributes to the O2 binding site. His-88 contributes to the heme b binding site.

Belongs to the globin family. Heterotetramer of two alpha chains and two beta chains. In terms of tissue distribution, red blood cells.

Its function is as follows. Involved in oxygen transport from the lung to the various peripheral tissues. Hemopressin acts as an antagonist peptide of the cannabinoid receptor CNR1. Hemopressin-binding efficiently blocks cannabinoid receptor CNR1 and subsequent signaling. The polypeptide is Hemoglobin subunit alpha-1 (HBA1) (Hylobates lar (Lar gibbon)).